We begin with the raw amino-acid sequence, 202 residues long: MIQTISADGIGYGATLQNHFLIAMPGMRDERFARSVIYMCAHNAEGAMGIIINRGQQLGFTDILVELGILERSQSIRLPARARNIAVRSGGPVDRSRGFVLHSDDYVVESSMAVSEKICLTATVDILRAISTGRGPSQALMALGYSGWGAGQLEAEIADNGWLACPASPELLFDAEIDTIYDRILAANGIDPLHLSQVAGHA.

It belongs to the UPF0301 (AlgH) family.

This chain is UPF0301 protein Meso_0753, found in Chelativorans sp. (strain BNC1).